An 84-amino-acid polypeptide reads, in one-letter code: Beta-mammal Tt1g (84 aa).

The signal sequence occupies residues 1–20 (MKGMILFISCILLIGIVVEC). The LCN-type CS-alpha/beta domain occupies 21–82 (KEGYLMDHEG…VWERATNRCG (62 aa)). 4 disulfide bridges follow: Cys-31-Cys-81, Cys-35-Cys-57, Cys-43-Cys-62, and Cys-47-Cys-64. At Cys-81 the chain carries Cysteine amide.

It belongs to the long (4 C-C) scorpion toxin superfamily. Sodium channel inhibitor family. Beta subfamily. Expressed by the venom gland.

The protein resides in the secreted. Functionally, beta toxins modify sodium channel function in two ways: an excitatory effect (shifting the activation process to more negative potential) and/or a depressant effect (reducing the peak current). At concentration of 500 nM this toxin produces channel opening at more negative potentials in hNav1.2/SCN2A and hNav1.3/SCN3A, which shows the biggest effect. On the other hand the peak current is decreased in hNav1.4/SCN4A and hNav1.5/SCN5A channels, without apparent modification of the activation gate. This toxin is active against mammals. This Tityus trivittatus (Argentinean scorpion) protein is Beta-mammal Tt1g.